The primary structure comprises 280 residues: Fructose-1,6-bisphosphatase/inositol-1-monophosphatase (280 aa).

Mg(2+)-binding residues include E73, D94, L96, and D97. Residues 97–99 (DGT), R195, V200, and R219 each bind substrate. D226 contributes to the Mg(2+) binding site.

Belongs to the inositol monophosphatase superfamily. FBPase class 4 family. The cofactor is Mg(2+).

It catalyses the reaction beta-D-fructose 1,6-bisphosphate + H2O = beta-D-fructose 6-phosphate + phosphate. The catalysed reaction is a myo-inositol phosphate + H2O = myo-inositol + phosphate. Its function is as follows. Phosphatase with broad specificity; it can dephosphorylate fructose 1,6-bisphosphate, and both D and L isomers of inositol-1-phosphate (I-1-P). This chain is Fructose-1,6-bisphosphatase/inositol-1-monophosphatase (suhB), found in Methanothermobacter thermautotrophicus (strain ATCC 29096 / DSM 1053 / JCM 10044 / NBRC 100330 / Delta H) (Methanobacterium thermoautotrophicum).